The primary structure comprises 85 residues: NAD(P)H-quinone oxidoreductase subunit L (85 aa).

2 helical membrane passes run 17–37 and 54–74; these read IVAV…PGFV and AFMY…SPFL.

The protein belongs to the complex I NdhL subunit family. As to quaternary structure, NDH-1 can be composed of about 15 different subunits; different subcomplexes with different compositions have been identified which probably have different functions.

It localises to the cellular thylakoid membrane. It catalyses the reaction a plastoquinone + NADH + (n+1) H(+)(in) = a plastoquinol + NAD(+) + n H(+)(out). It carries out the reaction a plastoquinone + NADPH + (n+1) H(+)(in) = a plastoquinol + NADP(+) + n H(+)(out). NDH-1 shuttles electrons from an unknown electron donor, via FMN and iron-sulfur (Fe-S) centers, to quinones in the respiratory and/or the photosynthetic chain. The immediate electron acceptor for the enzyme in this species is believed to be plastoquinone. Couples the redox reaction to proton translocation, and thus conserves the redox energy in a proton gradient. Cyanobacterial NDH-1 also plays a role in inorganic carbon-concentration. The chain is NAD(P)H-quinone oxidoreductase subunit L from Crocosphaera subtropica (strain ATCC 51142 / BH68) (Cyanothece sp. (strain ATCC 51142)).